Reading from the N-terminus, the 155-residue chain is Transcriptional repressor NrdR (155 aa).

Positions 1-24 are disordered; it reads MRCPYCGHEDSQVKDSRPTEDGAA. Residues 3–34 fold into a zinc finger; it reads CPYCGHEDSQVKDSRPTEDGAAIRRRRQCEDC. Residues 7-24 show a composition bias toward basic and acidic residues; it reads GHEDSQVKDSRPTEDGAA. One can recognise an ATP-cone domain in the interval 49 to 139; the sequence is VVVIKAGGTR…VYRDFTEARD (91 aa).

The protein belongs to the NrdR family. Zn(2+) serves as cofactor.

Negatively regulates transcription of bacterial ribonucleotide reductase nrd genes and operons by binding to NrdR-boxes. This is Transcriptional repressor NrdR from Sphingopyxis alaskensis (strain DSM 13593 / LMG 18877 / RB2256) (Sphingomonas alaskensis).